A 177-amino-acid chain; its full sequence is Large ribosomal subunit protein uL6 (177 aa).

Belongs to the universal ribosomal protein uL6 family. As to quaternary structure, part of the 50S ribosomal subunit.

Its function is as follows. This protein binds to the 23S rRNA, and is important in its secondary structure. It is located near the subunit interface in the base of the L7/L12 stalk, and near the tRNA binding site of the peptidyltransferase center. In Rubrobacter xylanophilus (strain DSM 9941 / JCM 11954 / NBRC 16129 / PRD-1), this protein is Large ribosomal subunit protein uL6.